Here is a 290-residue protein sequence, read N- to C-terminus: NAD kinase (290 aa).

The active-site Proton acceptor is D72. NAD(+) is bound by residues 72–73, K77, 145–146, D175, 186–191, and A210; these read DG, NE, and TAYSLS.

The protein belongs to the NAD kinase family. A divalent metal cation serves as cofactor.

The protein resides in the cytoplasm. It carries out the reaction NAD(+) + ATP = ADP + NADP(+) + H(+). In terms of biological role, involved in the regulation of the intracellular balance of NAD and NADP, and is a key enzyme in the biosynthesis of NADP. Catalyzes specifically the phosphorylation on 2'-hydroxyl of the adenosine moiety of NAD to yield NADP. The sequence is that of NAD kinase from Bacteroides fragilis (strain YCH46).